The primary structure comprises 173 residues: Photosystem I assembly protein Ycf3 (173 aa).

TPR repeat units follow at residues 35 to 68, 72 to 105, and 120 to 153; these read AFAYYRDGMSAQGDGEYAEALENYQEALRLEEDP, AFILYNMALVYASNGEHNRALEQYEQALALNAKM, and GSIAQEKGESDEADRRFDLAADFWSKAIRLAPNN.

This sequence belongs to the Ycf3 family.

The protein resides in the cellular thylakoid membrane. In terms of biological role, essential for the assembly of the photosystem I (PSI) complex. May act as a chaperone-like factor to guide the assembly of the PSI subunits. This Synechococcus sp. (strain RCC307) protein is Photosystem I assembly protein Ycf3.